The sequence spans 679 residues: MHKYHLNSPYLPKGDQPKAISELVYGVNQGKQYQTLLGATGTGKTFTIANVIEQTGRPTLVLAHNKTLAAQLCNELREFFPKNAVEYFISYYDYYQPEAYVPVSDTYIAKTSSVNEEIDMLRHSATRSLFERRDVIVVASISCIYGLGIPSEYLKASVKFQLGNDINVRESLRELVSNQYVRNDVDISRGNFRIKGDVLEIGPAYEDRLVRIELFGDEVEAIRYVDPITGEILENLNSINIYPAKHFVTPKDRLLIAIQSIQKELKDQLDFFNQEGKLLEAQRLEQRTKYDIEMLKEVGYCNGVENYARHLSGRDQGTPPECLIDYFPEDWLLVVDESHVTCSQLQAMYNGDQSRKKVLIDHGFRLPSAADNRPLKSDEFWSKAKQTVFISATPGDWECEVSTDGIVEQVIRPTGVLDPVVEVRPTAGQIDDLLDEIRKRVIKKERVLITTLTKRMAEDLSDYLSENRVKVRYLHSEIHSIERIEIIQDLRVGEYDVLVGVNLLREGLDLPEVSLVVILDADKEGFLRAKRSLIQTIGRAARHVDGFALLYADNLTESMSTAIQETERRRAIQQAYNQKHGIIPKPAGKKPSNSILSFLELSRKLQNEGDNADLVSITSKAVDSLNQSEDLGIAFVELPEIIDKLEGKMNLAAEELDFEQAAKLRDRIRQLRKKLSKPE.

The 152-residue stretch at 25–176 folds into the Helicase ATP-binding domain; that stretch reads YGVNQGKQYQ…NVRESLRELV (152 aa). 38–45 lines the ATP pocket; that stretch reads GATGTGKT. The Beta-hairpin motif lies at 91-114; sequence YYDYYQPEAYVPVSDTYIAKTSSV. In terms of domain architecture, Helicase C-terminal spans 429-591; it reads QIDDLLDEIR…IIPKPAGKKP (163 aa). The UVR domain occupies 639–674; that stretch reads PEIIDKLEGKMNLAAEELDFEQAAKLRDRIRQLRKK.

This sequence belongs to the UvrB family. Forms a heterotetramer with UvrA during the search for lesions. Interacts with UvrC in an incision complex.

The protein localises to the cytoplasm. Its function is as follows. The UvrABC repair system catalyzes the recognition and processing of DNA lesions. A damage recognition complex composed of 2 UvrA and 2 UvrB subunits scans DNA for abnormalities. Upon binding of the UvrA(2)B(2) complex to a putative damaged site, the DNA wraps around one UvrB monomer. DNA wrap is dependent on ATP binding by UvrB and probably causes local melting of the DNA helix, facilitating insertion of UvrB beta-hairpin between the DNA strands. Then UvrB probes one DNA strand for the presence of a lesion. If a lesion is found the UvrA subunits dissociate and the UvrB-DNA preincision complex is formed. This complex is subsequently bound by UvrC and the second UvrB is released. If no lesion is found, the DNA wraps around the other UvrB subunit that will check the other stand for damage. The polypeptide is UvrABC system protein B (Prochlorococcus marinus (strain MIT 9211)).